A 152-amino-acid polypeptide reads, in one-letter code: Isoquinoline 1-oxidoreductase subunit alpha (152 aa).

A 2Fe-2S ferredoxin-type domain is found at 1–77; sequence MIEFILNGQP…RQSVTTIEGL (77 aa). Residues Cys-39, Cys-44, and Cys-47 each coordinate [2Fe-2S] cluster.

As to quaternary structure, heterodimer of an alpha chain and a beta chain.

The catalysed reaction is isoquinoline + A + H2O = isoquinolin-1(2H)-one + AH2. Its function is as follows. Specific towards N-containing N-heterocyclic substrates, including isoquinoline, isoquinolin-5-ol, phthalazine and quinazoline. In Brevundimonas diminuta (Pseudomonas diminuta), this protein is Isoquinoline 1-oxidoreductase subunit alpha (iorA).